Consider the following 116-residue polypeptide: Protein AV2 (116 aa).

Belongs to the geminiviridae protein AV2/V2 family. In terms of assembly, interacts with host SGS3.

It localises to the host cytoplasm. Its subcellular location is the host perinuclear region. In terms of biological role, through its interaction with host SGS3, acts as a suppressor of RNA-mediated gene silencing, also known as post-transcriptional gene silencing (PTGS), a mechanism of plant viral defense that limits the accumulation of viral RNAs. The protein is Protein AV2 of Mungbean yellow mosaic virus (strain Vigna) (MYMV).